Here is a 1052-residue protein sequence, read N- to C-terminus: Membrane-bound transcription factor site-1 protease (1052 aa).

Positions M1–G17 are cleaved as a signal peptide. A propeptide spanning residues K18–L186 is cleaved from the precursor. N148 carries N-linked (GlcNAc...) asparagine glycosylation. S168 carries the phosphoserine modification. At R187–G999 the chain is on the lumenal side. The region spanning P190–Y472 is the Peptidase S8 domain. Catalysis depends on D218, which acts as the Charge relay system. N-linked (GlcNAc...) asparagine glycosylation is present at N236. The active-site Charge relay system is H249. An N-linked (GlcNAc...) asparagine glycan is attached at N305. Catalysis depends on S414, which acts as the Charge relay system. Residues N515 and N728 are each glycosylated (N-linked (GlcNAc...) asparagine). The segment covering P877–R887 has biased composition (polar residues). The tract at residues P877–M900 is disordered. An N-linked (GlcNAc...) asparagine glycan is attached at N939. Residues Q1000–S1022 form a helical membrane-spanning segment. Topologically, residues K1023–V1052 are cytoplasmic. Over residues S1026–R1037 the composition is skewed to basic residues. The disordered stretch occupies residues S1026–V1052.

It belongs to the peptidase S8 family. In terms of assembly, interacts with LYSET; this interaction bridges GNPTAB to MBTPS1. It depends on Ca(2+) as a cofactor. The 148 kDa zymogen is processed progressively into two membrane-bound 120 and 106 kDa forms in the endoplasmic reticulum, and late into a secreted 98 kDa form. The propeptide is autocatalytically removed through an intramolecular cleavage after Leu-186. Further cleavage generates 14, 10, and 8 kDa intermediates.

The protein resides in the endoplasmic reticulum membrane. Its subcellular location is the golgi apparatus membrane. The enzyme catalyses Processes precursors containing basic and hydrophobic/aliphatic residues at P4 and P2, respectively, with a relatively relaxed acceptance of amino acids at P1 and P3.. Inhibited by divalent copper and zinc ions, but not by nickel or cobalt. Inhibited by its prosegment, but not smaller fragments. Inhibited by 4-(2-aminoethyl)benzenesulfonyl fluoride (AEBSF), a serine protease inhibitor. Its function is as follows. Serine protease that cleaves after hydrophobic or small residues, provided that Arg or Lys is in position P4: known substrates include SREBF1/SREBP1, SREBF2/SREBP2, BDNF, GNPTAB, ATF6, ATF6B and FAM20C. Cleaves substrates after Arg-Ser-Val-Leu (SREBP2), Arg-His-Leu-Leu (ATF6), Arg-Gly-Leu-Thr (BDNF) and its own propeptide after Arg-Arg-Leu-Leu. Catalyzes the first step regulated intramembrane proteolysis activation of the sterol regulatory element-binding proteins (SREBPs) SREBF1/SREBP1 and SREBF2/SREBP2. Also mediates the first step of the regulated intramembrane proteolytic activation of the cyclic AMP-dependent transcription factor ATF-6 (ATF6 and ATF6B). Mediates the protein cleavage of GNPTAB into subunit alpha and beta, thereby participating in biogenesis of lysosomes. Cleaves the propeptide from FAM20C which is required for FAM20C secretion from the Golgi apparatus membrane and for enhancement of FAM20C kinase activity, promoting osteoblast differentiation and biomineralization. Involved in the regulation of M6P-dependent Golgi-to-lysosome trafficking of lysosomal enzymes. It is required for the activation of CREB3L2/BBF2H7, a transcriptional activator of MIA3/TANGO and other genes controlling mega vesicle formation. Therefore, it plays a key role in the regulation of mega vesicle-mediated collagen trafficking. In astrocytes and osteoblasts, upon DNA damage and ER stress, mediates the first step of the regulated intramembrane proteolytic activation of the transcription factor CREB3L1, leading to the inhibition of cell-cycle progression. In Mus musculus (Mouse), this protein is Membrane-bound transcription factor site-1 protease (Mbtps1).